The chain runs to 405 residues: Protein lin-11 (405 aa).

Glycyl lysine isopeptide (Lys-Gly) (interchain with G-Cter in SUMO) cross-links involve residues K17 and K18. 2 consecutive LIM zinc-binding domains span residues 68 to 124 (CAAC…RRYS) and 127 to 187 (CAGC…TATK). Polar residues predominate over residues 189–205 (STPTSIHRPVSNGSECN). Disordered stretches follow at residues 189–208 (STPTSIHRPVSNGSECNSDV) and 224–246 (GEGDCGKDNSDDSNSAKRRGPRT). A DNA-binding region (homeobox) is located at residues 241 to 300 (RRGPRTTIKAKQLETLKNAFAATPKPTRHIREQLAAETGLNMRVIQVWFQNRRSKERRMK).

Expressed in ADL, AVJL, AIZL, RICL, RIF and AVG neurons.

The protein resides in the nucleus. Its function is as follows. Probable transcription factor which is required for asymmetric division of vulval blast cells. Involved in olfactory plasticity probably by regulating the expression of transcription factor mbr-1 in RIF neurons. Plays a role in the chemorepulsive response toward ascaroside pheromones mediated by the ADL sensory neurons, probably by regulating E-box motif 5'-CANNTG-3' containing target genes in the ADL neurons. Plays a role in the differentiation of the ADL sensory neurons. This Caenorhabditis elegans protein is Protein lin-11 (lin-11).